A 183-amino-acid polypeptide reads, in one-letter code: Putative manganese efflux pump MntP (183 aa).

Helical transmembrane passes span 6–26 (LFLI…CIGL), 40–60 (IYFG…GFLF), 64–84 (IATM…IIMI), 101–121 (MNII…FTAL), 135–155 (LFIG…SKYL), and 158–178 (IDVI…FFGL).

This sequence belongs to the MntP (TC 9.B.29) family.

The protein localises to the cell membrane. In terms of biological role, probably functions as a manganese efflux pump. The protein is Putative manganese efflux pump MntP of Clostridium tetani (strain Massachusetts / E88).